A 249-amino-acid polypeptide reads, in one-letter code: 1-(5-phosphoribosyl)-5-[(5-phosphoribosylamino)methylideneamino] imidazole-4-carboxamide isomerase (249 aa).

Aspartate 8 acts as the Proton acceptor in catalysis. Aspartate 131 (proton donor) is an active-site residue.

Belongs to the HisA/HisF family.

The protein resides in the cytoplasm. The catalysed reaction is 1-(5-phospho-beta-D-ribosyl)-5-[(5-phospho-beta-D-ribosylamino)methylideneamino]imidazole-4-carboxamide = 5-[(5-phospho-1-deoxy-D-ribulos-1-ylimino)methylamino]-1-(5-phospho-beta-D-ribosyl)imidazole-4-carboxamide. It functions in the pathway amino-acid biosynthesis; L-histidine biosynthesis; L-histidine from 5-phospho-alpha-D-ribose 1-diphosphate: step 4/9. The sequence is that of 1-(5-phosphoribosyl)-5-[(5-phosphoribosylamino)methylideneamino] imidazole-4-carboxamide isomerase from Aromatoleum aromaticum (strain DSM 19018 / LMG 30748 / EbN1) (Azoarcus sp. (strain EbN1)).